We begin with the raw amino-acid sequence, 455 residues long: Probable galactarate/D-glucarate transporter GudP (455 aa).

12 helical membrane-spanning segments follow: residues 19–39, 59–79, 87–107, 108–128, 153–173, 177–197, 253–273, 289–309, 320–340, 348–368, 386–406, and 414–434; these read WFIV…RATL, YVFS…GWLL, IIAL…AIGF, FSAG…GLSE, AFFN…MGWL, FGWH…AVIW, IGVY…LTWF, GFVA…GGIV, LTFA…SMIV, WLVV…ALGW, LFNT…GYIV, and GALV…LLLV.

It belongs to the major facilitator superfamily. Phthalate permease family.

The protein localises to the cell membrane. The enzyme catalyses galactarate(in) + H(+)(in) = galactarate(out) + H(+)(out). The catalysed reaction is D-glucarate(in) + H(+)(in) = D-glucarate(out) + H(+)(out). In terms of biological role, probably involved in the uptake of galactarate and/or D-glucarate. This chain is Probable galactarate/D-glucarate transporter GudP, found in Bacillus subtilis (strain 168).